The chain runs to 314 residues: Methionyl-tRNA formyltransferase (314 aa).

111-114 (SLLP) contacts (6S)-5,6,7,8-tetrahydrofolate.

It belongs to the Fmt family.

The enzyme catalyses L-methionyl-tRNA(fMet) + (6R)-10-formyltetrahydrofolate = N-formyl-L-methionyl-tRNA(fMet) + (6S)-5,6,7,8-tetrahydrofolate + H(+). In terms of biological role, attaches a formyl group to the free amino group of methionyl-tRNA(fMet). The formyl group appears to play a dual role in the initiator identity of N-formylmethionyl-tRNA by promoting its recognition by IF2 and preventing the misappropriation of this tRNA by the elongation apparatus. In Coxiella burnetii (strain CbuG_Q212) (Coxiella burnetii (strain Q212)), this protein is Methionyl-tRNA formyltransferase.